A 188-amino-acid polypeptide reads, in one-letter code: Pyridoxal 5'-phosphate synthase subunit PdxT (188 aa).

G47–S49 contributes to the L-glutamine binding site. C79 (nucleophile) is an active-site residue. L-glutamine is bound by residues R105 and I134 to R135. Active-site charge relay system residues include H170 and E172.

Belongs to the glutaminase PdxT/SNO family. As to quaternary structure, in the presence of PdxS, forms a dodecamer of heterodimers. Only shows activity in the heterodimer.

The catalysed reaction is aldehydo-D-ribose 5-phosphate + D-glyceraldehyde 3-phosphate + L-glutamine = pyridoxal 5'-phosphate + L-glutamate + phosphate + 3 H2O + H(+). The enzyme catalyses L-glutamine + H2O = L-glutamate + NH4(+). Its pathway is cofactor biosynthesis; pyridoxal 5'-phosphate biosynthesis. Its function is as follows. Catalyzes the hydrolysis of glutamine to glutamate and ammonia as part of the biosynthesis of pyridoxal 5'-phosphate. The resulting ammonia molecule is channeled to the active site of PdxS. This Listeria monocytogenes serotype 4b (strain CLIP80459) protein is Pyridoxal 5'-phosphate synthase subunit PdxT.